Consider the following 107-residue polypeptide: MVNFNQFLKQAQSMQKKMQEAQEQMANARYTGKAGGGLVEVIATGKGEVEKISIDESLLKAEEKEMLEDLIKVAFNDAQQKCDEDSQNSLSGALNGMRLPPGFKMPF.

Belongs to the YbaB/EbfC family. In terms of assembly, homodimer.

The protein resides in the cytoplasm. Its subcellular location is the nucleoid. Functionally, binds to DNA and alters its conformation. May be involved in regulation of gene expression, nucleoid organization and DNA protection. The protein is Nucleoid-associated protein RC1337 of Rickettsia conorii (strain ATCC VR-613 / Malish 7).